A 1802-amino-acid chain; its full sequence is Non-reducing polyketide synthase nscA (1802 aa).

Residues 27 to 261 (DLFRRLDQHS…PLPVYDGLCH (235 aa)) form an N-terminal acylcarrier protein transacylase domain (SAT) region. Residues 396–829 (SSKLAIVGMA…GGNTTLLLED (434 aa)) form the Ketosynthase family 3 (KS3) domain. Active-site for beta-ketoacyl synthase activity residues include C569, H704, and H747. The interval 935–1235 (FTGQGAYYHG…SASAIPSCRR (301 aa)) is malonyl-CoA:ACP transacylase (MAT) domain. Positions 1322 to 1641 (TSLVHQITAE…RLLMDRFFSP (320 aa)) are product template (PT) domain. The interval 1326-1462 (HQITAETVEA…ATIRFEDPEA (137 aa)) is N-terminal hotdog fold. The 311-residue stretch at 1326–1636 (HQITAETVEA…FRRVPRLLMD (311 aa)) folds into the PKS/mFAS DH domain. H1358 (proton acceptor; for dehydratase activity) is an active-site residue. The interval 1490–1636 (ASRLSKPLAY…FRRVPRLLMD (147 aa)) is C-terminal hotdog fold. D1547 serves as the catalytic Proton donor; for dehydratase activity. A disordered region spans residues 1699–1729 (LLATSSKSSTPKESPIVTPAESERAEPVDNS). Over residues 1702 to 1713 (TSSKSSTPKESP) the composition is skewed to low complexity. Residues 1725 to 1802 (PVDNSMTSQC…EMTAWIEEYC (78 aa)) form the Carrier domain. The residue at position 1762 (S1762) is an O-(pantetheine 4'-phosphoryl)serine.

Requires pantetheine 4'-phosphate as cofactor.

It functions in the pathway secondary metabolite biosynthesis. In terms of biological role, non-reducing polyketide synthase; part of the gene cluster that mediates the biosynthesis of neosartoricin B, a prenylated anthracenone that probably exhibits T-cell antiproliferative activity, suggestive of a physiological role as an immunosuppressive agent. The non-reducing polyketide synthase nscA probably synthesizes and cyclizes the decaketide backbone. The hydrolase nscB then mediates the product release through hydrolysis followed by spontaneous decarboxylation. The prenyltransferase nscD catalyzes the addition of the dimethylallyl group to the aromatic C5. The FAD-dependent monooxygenase nscC is then responsible for the stereospecific hydroxylation at C2. Neosartoricin B can be converted into two additional compounds neosartoricins C and D. Neosartoricin C is a spirocyclic compound that is cyclized through the attack of C3 hydroxyl on C14, followed by dehydration. On the other hand, neosartoricin D is a further cyclized compound in which attack of C2 on C14 in neosartoricin C results in the formation of the acetal-containing dioxabicyclo-octanone ring. Both of these compounds are novel and possibly represent related metabolites of the gene cluster. The protein is Non-reducing polyketide synthase nscA of Trichophyton tonsurans (strain CBS 112818) (Scalp ringworm fungus).